We begin with the raw amino-acid sequence, 1312 residues long: DNA repair protein RAD50 (1312 aa).

ATP contacts are provided by Arg13, Asn36, Gly37, Gly39, Lys40, Thr41, Thr42, Ile65, Asp67, and Gln158. Mg(2+) is bound at residue Thr41. A Mg(2+)-binding site is contributed by Gln158. Coiled-coil stretches lie at residues 185–347 (TKAL…LIRR) and 403–558 (QDLT…LQND). Ser469 bears the Phosphoserine mark. Residue Thr568 is modified to Phosphothreonine. A coiled-coil region spans residues 640 to 678 (DCTIDEYNDVLEETELSYKTALENLKMHQTTLEFNRKAL). The region spanning 640–741 (DCTIDEYNDV…SLRLLEKHII (102 aa)) is the Zinc-hook domain. Residues Cys687 and Cys690 each coordinate Zn(2+). Coiled coils occupy residues 712–741 (DANF…KHII) and 787–1108 (LAES…DIEK).

It belongs to the SMC family. RAD50 subfamily. Component of the MRN complex composed of two heterodimers RAD50 and MRE11 associated with a single XRS2. The MRN complexes dimerize on DNA to form joined MRN-MRN oligomers required for DNA double-strand break repair. The cofactor is Zn(2+).

It localises to the nucleus. The protein localises to the chromosome. The catalysed reaction is ATP + H2O = ADP + phosphate + H(+). Functionally, component of the MRN complex, which plays a central role in double-strand break (DSB) repair, DNA recombination, maintenance of telomere integrity and meiosis. The MRN complex is involved in the repair of DNA double-strand breaks (DSBs) via homologous recombination (HR), an error-free mechanism which primarily occurs during S and G2 phases. The complex (1) mediates the end resection of damaged DNA, which generates proper single-stranded DNA, a key initial steps in HR, and is (2) required for the recruitment of other repair factors and efficient activation of TEL1/ATM and ATR upon DNA damage. The MRN complex possesses single-strand endonuclease activity and double-strand-specific 3'-5' exonuclease activity, which are provided by MRE11, to initiate end resection, which is required for single-strand invasion and recombination. Within the complex, RAD50 is both required to bind DNA ends and hold them in close proximity and regulate the activity of MRE11. RAD50 provides an ATP-dependent control of MRE11 by positioning DNA ends into the MRE11 active site: ATP-binding induces a large structural change from an open form with accessible MRE11 nuclease sites into a closed form. The MRN complex is also required for the processing of R-loops. This is DNA repair protein RAD50 from Saccharomyces cerevisiae (strain ATCC 204508 / S288c) (Baker's yeast).